We begin with the raw amino-acid sequence, 151 residues long: Large ribosomal subunit protein uL23m (151 aa).

Positions 120-143 (DDKKSLEDAKKNHKKFLDKNKDRP) are enriched in basic and acidic residues. The interval 120–151 (DDKKSLEDAKKNHKKFLDKNKDRPGTPGWFSI) is disordered.

Belongs to the universal ribosomal protein uL23 family. Component of the mitochondrial ribosome large subunit (39S) which comprises a 16S rRNA and about 50 distinct proteins.

It is found in the mitochondrion. This Anopheles gambiae (African malaria mosquito) protein is Large ribosomal subunit protein uL23m (mRpL23).